A 332-amino-acid polypeptide reads, in one-letter code: Abl interactor homolog (332 aa).

Residues 73–104 are a coiled coil; that stretch reads HITSLLQLQTNEMEKLNIEIQTLTQRVRMIHD. Positions 152–332 are disordered; sequence SDINQNGVPP…NDFPPPPPPM (181 aa). The segment covering 164–206 has biased composition (low complexity); sequence NHSNSSANLTSSSGHLAASSTSNSSTPSYQSPSYSSQPTISSG. Residues 221–247 show a composition bias toward pro residues; sequence APPPPSLSVPAAPPPPVMNVPPPPPTS. Residues 248–257 are compositionally biased toward polar residues; sequence QRPSSVNNNA. Positions 277–314 are enriched in pro residues; it reads LPPPPSFGLPPPPTLGDDFPPPPPPPVGSYDFPPPPAR.

This sequence belongs to the ABI family. As to quaternary structure, part of a Scar/WAVE complex containing brk1, scrA, abiA, pirA and napA. Interacts with scrA.

Functionally, involved in regulation of actin and microtubule organization. Required for proper cytokinesis. The sequence is that of Abl interactor homolog (abiA) from Dictyostelium discoideum (Social amoeba).